The primary structure comprises 107 residues: Ig kappa chain V region 4135 (107 aa).

The framework-1 stretch occupies residues 1–24 (ADIVMTQTPASVSEPVGGTVTIKC). Residues 25-35 (QTSQSIDDYLS) are complementarity-determining-1. A framework-2 region spans residues 36–50 (WYQQKPGQPPKGLIY). Residues 51 to 57 (RASTLAS) form a complementarity-determining-2 region. Residues 58–89 (GVPSRFRGSGSGTDFTLTISDLECADAATYYC) are framework-3. The interval 90–96 (QSTYGVG) is complementarity-determining-3. The segment at 97–106 (FGGGTEVVVK) is framework-4.

This is Ig kappa chain V region 4135 from Oryctolagus cuniculus (Rabbit).